The primary structure comprises 597 residues: Elongation factor 4 (597 aa).

The tr-type G domain maps to 2–184; sequence QHIRNFSIIA…AIVARVPSPE (183 aa). GTP contacts are provided by residues 14 to 19 and 131 to 134; these read DHGKST and NKMD.

The protein belongs to the TRAFAC class translation factor GTPase superfamily. Classic translation factor GTPase family. LepA subfamily.

Its subcellular location is the cell inner membrane. It catalyses the reaction GTP + H2O = GDP + phosphate + H(+). Required for accurate and efficient protein synthesis under certain stress conditions. May act as a fidelity factor of the translation reaction, by catalyzing a one-codon backward translocation of tRNAs on improperly translocated ribosomes. Back-translocation proceeds from a post-translocation (POST) complex to a pre-translocation (PRE) complex, thus giving elongation factor G a second chance to translocate the tRNAs correctly. Binds to ribosomes in a GTP-dependent manner. The polypeptide is Elongation factor 4 (Bordetella avium (strain 197N)).